The sequence spans 209 residues: Kynurenine formamidase (209 aa).

Residue W18 coordinates substrate. Zn(2+)-binding residues include H48, H52, and D54. H58 (proton donor/acceptor) is an active-site residue. Zn(2+) contacts are provided by H160 and E172.

This sequence belongs to the Cyclase 1 superfamily. KynB family. Homodimer. Zn(2+) is required as a cofactor.

The enzyme catalyses N-formyl-L-kynurenine + H2O = L-kynurenine + formate + H(+). The protein operates within amino-acid degradation; L-tryptophan degradation via kynurenine pathway; L-kynurenine from L-tryptophan: step 2/2. Its function is as follows. Catalyzes the hydrolysis of N-formyl-L-kynurenine to L-kynurenine, the second step in the kynurenine pathway of tryptophan degradation. This is Kynurenine formamidase from Maricaulis maris (strain MCS10) (Caulobacter maris).